The primary structure comprises 333 residues: Flap endonuclease 1 (333 aa).

Positions 1–99 (MGVALRDILA…ETNAERKKLR (99 aa)) are N-domain. Mg(2+) is bound by residues Asp-28, Asp-81, Glu-153, Glu-155, Asp-174, Asp-176, and Asp-235. The interval 117 to 256 (EAYRQARSAT…TALKIVKSGG (140 aa)) is I-domain. The interval 325 to 333 (GQKTLESFF) is interaction with PCNA.

The protein belongs to the XPG/RAD2 endonuclease family. FEN1 subfamily. Interacts with PCNA. PCNA stimulates the nuclease activity without altering cleavage specificity. Requires Mg(2+) as cofactor.

Structure-specific nuclease with 5'-flap endonuclease and 5'-3' exonuclease activities involved in DNA replication and repair. During DNA replication, cleaves the 5'-overhanging flap structure that is generated by displacement synthesis when DNA polymerase encounters the 5'-end of a downstream Okazaki fragment. Binds the unpaired 3'-DNA end and kinks the DNA to facilitate 5' cleavage specificity. Cleaves one nucleotide into the double-stranded DNA from the junction in flap DNA, leaving a nick for ligation. Also involved in the base excision repair (BER) pathway. Acts as a genome stabilization factor that prevents flaps from equilibrating into structures that lead to duplications and deletions. Also possesses 5'-3' exonuclease activity on nicked or gapped double-stranded DNA. The sequence is that of Flap endonuclease 1 from Methanoregula boonei (strain DSM 21154 / JCM 14090 / 6A8).